Here is a 385-residue protein sequence, read N- to C-terminus: Serine/threonine-protein kinase 52 (385 aa).

The Protein kinase domain maps to 82–356; it reads LIIKTVLARG…PEMDEVVPML (275 aa). Residues 88–96 and K109 contribute to the ATP site; that span reads LARGTFGTV. The active-site Proton acceptor is D227.

This sequence belongs to the protein kinase superfamily. Ser/Thr protein kinase family. In terms of assembly, binds to CBC1. Associates with PHOT1, PHOT2, BLUS1 and PM H(+)-ATPase (e.g. AHA1). Post-translationally, autophosphorylated. Phosphorylated by HT1 in response to low CO(2) concentrations. In terms of tissue distribution, expressed in guard cells.

Its subcellular location is the cytoplasm. It is found in the cytosol. It carries out the reaction L-seryl-[protein] + ATP = O-phospho-L-seryl-[protein] + ADP + H(+). It catalyses the reaction L-threonyl-[protein] + ATP = O-phospho-L-threonyl-[protein] + ADP + H(+). Functionally, serine/threonine protein kinase that phosphorylates proteins on serine and threonine residues. Collectively with CBC1, acts as a negative regulator of stomatal opening, probably via the inhibition of plasma membrane-type ATPases (AHA1 and AHA2) activity in guard cells, but in an abscisic acid (ABA)-independent manner. However, at low concentrations of CO(2), together with CBC1, stimulates stomatal opening via the inhibition of S-type anion channels in response to blue light (BL) and red light (RL), thus being a key component to maximize photosynthesis in the light under low CO(2) conditions. Required for temperature decrease in leaves. Downstream target of HIGH LEAF TEMPERATURE1 (HT1) during low CO(2)-induced stomatal opening. The sequence is that of Serine/threonine-protein kinase 52 from Arabidopsis thaliana (Mouse-ear cress).